Here is a 328-residue protein sequence, read N- to C-terminus: D-cysteine desulfhydrase (328 aa).

An N6-(pyridoxal phosphate)lysine modification is found at Lys51.

The protein belongs to the ACC deaminase/D-cysteine desulfhydrase family. In terms of assembly, homodimer. Requires pyridoxal 5'-phosphate as cofactor.

It catalyses the reaction D-cysteine + H2O = hydrogen sulfide + pyruvate + NH4(+) + H(+). Functionally, catalyzes the alpha,beta-elimination reaction of D-cysteine and of several D-cysteine derivatives. It could be a defense mechanism against D-cysteine. The chain is D-cysteine desulfhydrase from Shigella flexneri serotype 5b (strain 8401).